A 156-amino-acid polypeptide reads, in one-letter code: 6,7-dimethyl-8-ribityllumazine synthase (156 aa).

Residues phenylalanine 22, 57–59 (AYE), and 81–83 (TVI) each bind 5-amino-6-(D-ribitylamino)uracil. 86–87 (GT) lines the (2S)-2-hydroxy-3-oxobutyl phosphate pocket. The Proton donor role is filled by histidine 89. Phenylalanine 114 lines the 5-amino-6-(D-ribitylamino)uracil pocket. Arginine 128 contacts (2S)-2-hydroxy-3-oxobutyl phosphate.

This sequence belongs to the DMRL synthase family. As to quaternary structure, forms an icosahedral capsid composed of 60 subunits, arranged as a dodecamer of pentamers.

It carries out the reaction (2S)-2-hydroxy-3-oxobutyl phosphate + 5-amino-6-(D-ribitylamino)uracil = 6,7-dimethyl-8-(1-D-ribityl)lumazine + phosphate + 2 H2O + H(+). It functions in the pathway cofactor biosynthesis; riboflavin biosynthesis; riboflavin from 2-hydroxy-3-oxobutyl phosphate and 5-amino-6-(D-ribitylamino)uracil: step 1/2. Catalyzes the formation of 6,7-dimethyl-8-ribityllumazine by condensation of 5-amino-6-(D-ribitylamino)uracil with 3,4-dihydroxy-2-butanone 4-phosphate. This is the penultimate step in the biosynthesis of riboflavin. The protein is 6,7-dimethyl-8-ribityllumazine synthase of Serratia proteamaculans (strain 568).